Reading from the N-terminus, the 754-residue chain is uncharacterized protein (754 aa).

Residues serine 585 and histidine 707 each act as charge relay system in the active site. The interval 733–754 is disordered; sequence SHAPPPSRKARSAARRSTDPVR.

Belongs to the peptidase S9A family.

This is an uncharacterized protein from Sinorhizobium fredii (strain NBRC 101917 / NGR234).